We begin with the raw amino-acid sequence, 822 residues long: Glycerol-3-phosphate acyltransferase (822 aa).

The HXXXXD motif motif lies at 306–311 (CHRSHM). Positions 803–822 (ASSSAEMEAESQAVEETTQE) are disordered.

Belongs to the GPAT/DAPAT family.

It is found in the cell inner membrane. The enzyme catalyses sn-glycerol 3-phosphate + an acyl-CoA = a 1-acyl-sn-glycero-3-phosphate + CoA. The protein operates within phospholipid metabolism; CDP-diacylglycerol biosynthesis; CDP-diacylglycerol from sn-glycerol 3-phosphate: step 1/3. This Pectobacterium carotovorum subsp. carotovorum (strain PC1) protein is Glycerol-3-phosphate acyltransferase.